We begin with the raw amino-acid sequence, 224 residues long: Elongation factor Ts (224 aa).

The interval 81–84 (TDFV) is involved in Mg(2+) ion dislocation from EF-Tu.

Belongs to the EF-Ts family.

It is found in the cytoplasm. Its function is as follows. Associates with the EF-Tu.GDP complex and induces the exchange of GDP to GTP. It remains bound to the aminoacyl-tRNA.EF-Tu.GTP complex up to the GTP hydrolysis stage on the ribosome. The chain is Elongation factor Ts from Finegoldia magna (strain ATCC 29328 / DSM 20472 / WAL 2508) (Peptostreptococcus magnus).